The chain runs to 79 residues: Large ribosomal subunit protein uL22 (79 aa).

This sequence belongs to the universal ribosomal protein uL22 family. As to quaternary structure, part of the 50S ribosomal subunit.

Functionally, this protein binds specifically to 23S rRNA; its binding is stimulated by other ribosomal proteins, e.g. L4, L17, and L20. It is important during the early stages of 50S assembly. It makes multiple contacts with different domains of the 23S rRNA in the assembled 50S subunit and ribosome. The globular domain of the protein is located near the polypeptide exit tunnel on the outside of the subunit, while an extended beta-hairpin is found that lines the wall of the exit tunnel in the center of the 70S ribosome. This is Large ribosomal subunit protein uL22 (rplV) from Prunus armeniaca phytoplasma.